The primary structure comprises 325 residues: Tetraacyldisaccharide 4'-kinase (325 aa).

Thr55–Thr62 contacts ATP.

It belongs to the LpxK family.

It carries out the reaction a lipid A disaccharide + ATP = a lipid IVA + ADP + H(+). It participates in glycolipid biosynthesis; lipid IV(A) biosynthesis; lipid IV(A) from (3R)-3-hydroxytetradecanoyl-[acyl-carrier-protein] and UDP-N-acetyl-alpha-D-glucosamine: step 6/6. Its function is as follows. Transfers the gamma-phosphate of ATP to the 4'-position of a tetraacyldisaccharide 1-phosphate intermediate (termed DS-1-P) to form tetraacyldisaccharide 1,4'-bis-phosphate (lipid IVA). The sequence is that of Tetraacyldisaccharide 4'-kinase from Salmonella enteritidis PT4 (strain P125109).